The following is a 449-amino-acid chain: Zinc finger and BTB domain-containing protein 14 (449 aa).

The region spanning 36 to 102 (CDIAIVVEDV…MYTAKISVKK (67 aa)) is the BTB domain. A Glycyl lysine isopeptide (Lys-Gly) (interchain with G-Cter in SUMO2) cross-link involves residue Lys-46. The short motif at 50–66 (HRCVLAACSTYFKKLFK) is the Nuclear localization signal element. Positions 156–194 (ADAQDDDVEEIGDQDDSPSDDTVEGTPPSQEDGKSPTTT) are disordered. The segment covering 157-178 (DAQDDDVEEIGDQDDSPSDDTV) has biased composition (acidic residues). Glycyl lysine isopeptide (Lys-Gly) (interchain with G-Cter in SUMO2) cross-links involve residues Lys-203 and Lys-249. C2H2-type zinc fingers lie at residues 277-304 (IACQ…ADRP), 305-332 (FVCE…GYKP), 333-360 (YSCE…NERP), 361-388 (FACH…GEKP), and 389-417 (FVCG…ERKQ). Over residues 405–417 (KRHENNMHSERKQ) the composition is skewed to basic and acidic residues. Residues 405–424 (KRHENNMHSERKQVTPSAIQ) form a disordered region.

This sequence belongs to the krueppel C2H2-type zinc-finger protein family. In terms of assembly, interacts with ZBTB21. As to expression, ubiquitous.

The protein resides in the nucleus. Its function is as follows. Transcriptional activator of the dopamine transporter (DAT), binding it's promoter at the consensus sequence 5'-CCTGCACAGTTCACGGA-3'. Binds to 5'-d(GCC)(n)-3' trinucleotide repeats in promoter regions and acts as a repressor of the FMR1 gene. Transcriptional repressor of MYC and thymidine kinase promoters. The protein is Zinc finger and BTB domain-containing protein 14 (Zbtb14) of Mus musculus (Mouse).